The chain runs to 532 residues: Type 2 DNA topoisomerase 6 subunit B (532 aa).

ATP contacts are provided by residues Asn-41, Asp-75, 96-97 (SK), 105-112 (GMYGLGVK), and Lys-427.

Belongs to the TOP6B family. In terms of assembly, homodimer. Heterotetramer of two Top6A and two Top6B chains.

It carries out the reaction ATP-dependent breakage, passage and rejoining of double-stranded DNA.. In terms of biological role, relaxes both positive and negative superturns and exhibits a strong decatenase activity. This chain is Type 2 DNA topoisomerase 6 subunit B, found in Sulfurisphaera tokodaii (strain DSM 16993 / JCM 10545 / NBRC 100140 / 7) (Sulfolobus tokodaii).